Here is a 264-residue protein sequence, read N- to C-terminus: Undecaprenyl-diphosphatase (264 aa).

Helical transmembrane passes span 7–27 (VVILGFIQGIAEFLPISSSGH), 39–59 (LPIVFDIYLHLATVLVVMIYY), 89–109 (ILLILIITIITAFIGIFIEMF), 112–132 (LFTLNLVLINFIVTSILLFLL), 145–165 (ILLAGCLIGTMQGIGAMPGIS), 182–202 (SESFEISFLSLIPIVFGSLLL), 212–232 (MLFSIFEINLGAIIAFLVGLF), and 244–264 (SKLYYFSVYLIILVSLVYFLF).

The protein belongs to the UppP family.

It is found in the cell inner membrane. It carries out the reaction di-trans,octa-cis-undecaprenyl diphosphate + H2O = di-trans,octa-cis-undecaprenyl phosphate + phosphate + H(+). Catalyzes the dephosphorylation of undecaprenyl diphosphate (UPP). Confers resistance to bacitracin. The polypeptide is Undecaprenyl-diphosphatase (Borrelia hermsii (strain HS1 / DAH)).